Here is a 333-residue protein sequence, read N- to C-terminus: MSTLVESPVPSNDSQAAAPAAYDPTQKQKSQAKTARIPIKVVAAEKLKKPEWIRVRAAAPGSRFYDIKRILREHNLHTVCEEASCPNIGECFGKGTATFMIMGDKCTRRCPFCDVGHGRPDPLDTQEPENLARTIAALKLSYVVITSVDRDDLRDGGAAHFVECIAKVREYSPDTRIEVLVPDFRGRLDRALHILNSGPPDVMNHNLETVPRLYKQARPGSDYAHSLKLLVEFKKLHPEVPTKSGLMLGLGETDEEILQVMRDMREHNVDMLTIGQYLQPSEHHLPVLRYVHPDTFAMFEREAYAMGFTHAAVGAMVRSSYHADQQAHAAGVN.

Positions 1-15 (MSTLVESPVPSNDSQ) are enriched in polar residues. Residues 1-34 (MSTLVESPVPSNDSQAAAPAAYDPTQKQKSQAKT) form a disordered region. Residues C80, C85, C91, C106, C110, C113, and S320 each coordinate [4Fe-4S] cluster. In terms of domain architecture, Radical SAM core spans 91–309 (CFGKGTATFM…EREAYAMGFT (219 aa)).

It belongs to the radical SAM superfamily. Lipoyl synthase family. The cofactor is [4Fe-4S] cluster.

The protein localises to the cytoplasm. The enzyme catalyses [[Fe-S] cluster scaffold protein carrying a second [4Fe-4S](2+) cluster] + N(6)-octanoyl-L-lysyl-[protein] + 2 oxidized [2Fe-2S]-[ferredoxin] + 2 S-adenosyl-L-methionine + 4 H(+) = [[Fe-S] cluster scaffold protein] + N(6)-[(R)-dihydrolipoyl]-L-lysyl-[protein] + 4 Fe(3+) + 2 hydrogen sulfide + 2 5'-deoxyadenosine + 2 L-methionine + 2 reduced [2Fe-2S]-[ferredoxin]. It functions in the pathway protein modification; protein lipoylation via endogenous pathway; protein N(6)-(lipoyl)lysine from octanoyl-[acyl-carrier-protein]: step 2/2. Functionally, catalyzes the radical-mediated insertion of two sulfur atoms into the C-6 and C-8 positions of the octanoyl moiety bound to the lipoyl domains of lipoate-dependent enzymes, thereby converting the octanoylated domains into lipoylated derivatives. The chain is Lipoyl synthase from Bordetella parapertussis (strain 12822 / ATCC BAA-587 / NCTC 13253).